A 172-amino-acid chain; its full sequence is Large ribosomal subunit protein uL10 (172 aa).

This sequence belongs to the universal ribosomal protein uL10 family. In terms of assembly, part of the ribosomal stalk of the 50S ribosomal subunit. The N-terminus interacts with L11 and the large rRNA to form the base of the stalk. The C-terminus forms an elongated spine to which L12 dimers bind in a sequential fashion forming a multimeric L10(L12)X complex.

Functionally, forms part of the ribosomal stalk, playing a central role in the interaction of the ribosome with GTP-bound translation factors. The polypeptide is Large ribosomal subunit protein uL10 (Brucella abortus (strain S19)).